The following is a 171-amino-acid chain: Small ribosomal subunit protein bS16 (171 aa).

The tract at residues 114 to 171 (EGGPTTEAAKPKKKAATSGAKKAAKAAEPEAAASEAAEPEAAAAPAEGGEQAESSAES) is disordered. Residues 142–171 (PEAAASEAAEPEAAAAPAEGGEQAESSAES) are compositionally biased toward low complexity.

Belongs to the bacterial ribosomal protein bS16 family.

The sequence is that of Small ribosomal subunit protein bS16 from Mycolicibacterium paratuberculosis (strain ATCC BAA-968 / K-10) (Mycobacterium paratuberculosis).